The sequence spans 253 residues: MLTRRLVVCLDVKGGRVVKGVQFEGLRDVGDPVELARRYEAEGADELTFLDISASAEERDTLWELVRRTAEQLFIPLAVGGGVRTVDDVGRALRAGADKVSINSAAVANPALLTACAERFGAQCVVASIDAKRDGDRWRVYTHGGRKPTDLDAVAWARECVARGAGEVLLTSIDRDGARTGYDLALTRAVSEAVDVPVIASGGAGSAAHVRAAFQEGGADAALVAGILHDGVTTVGAIKALLRESGLHIRSLT.

Active-site residues include Asp11 and Asp130.

It belongs to the HisA/HisF family. In terms of assembly, heterodimer of HisH and HisF.

It localises to the cytoplasm. It catalyses the reaction 5-[(5-phospho-1-deoxy-D-ribulos-1-ylimino)methylamino]-1-(5-phospho-beta-D-ribosyl)imidazole-4-carboxamide + L-glutamine = D-erythro-1-(imidazol-4-yl)glycerol 3-phosphate + 5-amino-1-(5-phospho-beta-D-ribosyl)imidazole-4-carboxamide + L-glutamate + H(+). Its pathway is amino-acid biosynthesis; L-histidine biosynthesis; L-histidine from 5-phospho-alpha-D-ribose 1-diphosphate: step 5/9. Functionally, IGPS catalyzes the conversion of PRFAR and glutamine to IGP, AICAR and glutamate. The HisF subunit catalyzes the cyclization activity that produces IGP and AICAR from PRFAR using the ammonia provided by the HisH subunit. The sequence is that of Imidazole glycerol phosphate synthase subunit HisF from Myxococcus xanthus (strain DK1622).